The primary structure comprises 301 residues: Rhodopsin (301 aa).

Over 1-18 the chain is Extracellular; it reads LHMIHLHWYQYPPMNPMM. The helical transmembrane segment at 19–43 threads the bilayer; it reads YPLLLIFMFITGIPCLAGNFVTIWV. Residues 44–55 lie on the Cytoplasmic side of the membrane; it reads FMTTKSLRSPAN. The chain crosses the membrane as a helical span at residues 56 to 78; that stretch reads LLVVNLAMSDFLMMFTMFPPMMI. The Extracellular portion of the chain corresponds to 79-92; sequence TCYYHTWTLGPTFC. Cys92 and Cys169 are joined by a disulfide. The chain crosses the membrane as a helical span at residues 93 to 115; it reads QVYAFLGNLFGCTSIWTMVFITF. Residues 116-118 carry the 'Ionic lock' involved in activated form stabilization motif; the sequence is DRY. Over 116–134 the chain is Cytoplasmic; the sequence is DRYNVIVKGVAGEPLSNKK. Residues 135–155 form a helical membrane-spanning segment; it reads AALWILSAWVLSFSWCSAPFF. The Extracellular portion of the chain corresponds to 156–182; it reads GWNRYVPEGNLTGCGTDYLSEDALSRS. N-linked (GlcNAc...) asparagine glycosylation is present at Asn165. A helical transmembrane segment spans residues 183-204; sequence YLYVYSVWVYFLPLLITIYCYV. Residues 205 to 245 lie on the Cytoplasmic side of the membrane; that stretch reads FIIKAVAAHEKGMRDQAKKMGIKSLRNEEAQKTSAECRLAK. A helical membrane pass occupies residues 246 to 267; that stretch reads IAMTTVALWFIAWTPYLLINWV. Residues 268-278 are Extracellular-facing; sequence GMFARSYLSPV. The chain crosses the membrane as a helical span at residues 279–300; sequence YTIWGYVFAKANAVYNPIVYAI. The residue at position 288 (Lys288) is an N6-(retinylidene)lysine.

This sequence belongs to the G-protein coupled receptor 1 family. Opsin subfamily. As to quaternary structure, homodimer. Interacts with GNAQ. Contains one covalently linked retinal chromophore.

It is found in the cell projection. The protein resides in the rhabdomere membrane. Its function is as follows. Photoreceptor required for image-forming vision at low light intensity. Can use both retinal and 3-dehydroretinal as visual pigment. Light-induced isomerization of 11-cis to all-trans retinal triggers a conformational change that activates signaling via G-proteins. Signaling via GNAQ probably mediates the activation of phospholipase C. The protein is Rhodopsin (RHO) of Cambarellus shufeldtii (Cajun dwarf crayfish).